The following is a 111-amino-acid chain: Large ribosomal subunit protein uL22 (111 aa).

This sequence belongs to the universal ribosomal protein uL22 family. In terms of assembly, part of the 50S ribosomal subunit.

This protein binds specifically to 23S rRNA; its binding is stimulated by other ribosomal proteins, e.g. L4, L17, and L20. It is important during the early stages of 50S assembly. It makes multiple contacts with different domains of the 23S rRNA in the assembled 50S subunit and ribosome. Functionally, the globular domain of the protein is located near the polypeptide exit tunnel on the outside of the subunit, while an extended beta-hairpin is found that lines the wall of the exit tunnel in the center of the 70S ribosome. The polypeptide is Large ribosomal subunit protein uL22 (Thermoanaerobacter pseudethanolicus (strain ATCC 33223 / 39E) (Clostridium thermohydrosulfuricum)).